Consider the following 221-residue polypeptide: Phosphoribosylformylglycinamidine synthase subunit PurQ (221 aa).

The region spanning 5–221 is the Glutamine amidotransferase type-1 domain; that stretch reads TVGIVVFPGS…LYTLRSLITQ (217 aa). The Nucleophile role is filled by C89. Residues H197 and E199 contribute to the active site.

Part of the FGAM synthase complex composed of 1 PurL, 1 PurQ and 2 PurS subunits.

It is found in the cytoplasm. The catalysed reaction is N(2)-formyl-N(1)-(5-phospho-beta-D-ribosyl)glycinamide + L-glutamine + ATP + H2O = 2-formamido-N(1)-(5-O-phospho-beta-D-ribosyl)acetamidine + L-glutamate + ADP + phosphate + H(+). It catalyses the reaction L-glutamine + H2O = L-glutamate + NH4(+). It functions in the pathway purine metabolism; IMP biosynthesis via de novo pathway; 5-amino-1-(5-phospho-D-ribosyl)imidazole from N(2)-formyl-N(1)-(5-phospho-D-ribosyl)glycinamide: step 1/2. Its function is as follows. Part of the phosphoribosylformylglycinamidine synthase complex involved in the purines biosynthetic pathway. Catalyzes the ATP-dependent conversion of formylglycinamide ribonucleotide (FGAR) and glutamine to yield formylglycinamidine ribonucleotide (FGAM) and glutamate. The FGAM synthase complex is composed of three subunits. PurQ produces an ammonia molecule by converting glutamine to glutamate. PurL transfers the ammonia molecule to FGAR to form FGAM in an ATP-dependent manner. PurS interacts with PurQ and PurL and is thought to assist in the transfer of the ammonia molecule from PurQ to PurL. The polypeptide is Phosphoribosylformylglycinamidine synthase subunit PurQ (Prochlorococcus marinus subsp. pastoris (strain CCMP1986 / NIES-2087 / MED4)).